The following is a 382-amino-acid chain: Mannitol-1-phosphate 5-dehydrogenase (382 aa).

3–14 (ALHFGAGNIGRG) contributes to the NAD(+) binding site. K269 carries the N6-acetyllysine modification.

Belongs to the mannitol dehydrogenase family.

The enzyme catalyses D-mannitol 1-phosphate + NAD(+) = beta-D-fructose 6-phosphate + NADH + H(+). In Escherichia coli O127:H6 (strain E2348/69 / EPEC), this protein is Mannitol-1-phosphate 5-dehydrogenase.